The chain runs to 63 residues: Transmembrane protein 033R (63 aa).

In Dryophytes versicolor (chameleon treefrog), this protein is Transmembrane protein 033R.